The chain runs to 250 residues: MATSSITIPTIRTPIHRSKFLGQTHQFSTVNRSVFPPPKQQSKLYQVKAMGKFNLWEVMGGRGLCNGEKGIEKELQRNIEDEQETSKAENNETERESDDSNLSFKVPEDGFEKEMMGLTGGFPGGEKGLKTFIEKNPPPPPPPPPAKQGSDASAVATDKKPKAPKLPLLMPGMIAIVKNQNSPYHMYCGIVQRITDGKAGVLFEGGNWDRLITFRLEELERREKGPPGKNPKSCILEPLIEQMQKEEAAP.

Residues 1–48 (MATSSITIPTIRTPIHRSKFLGQTHQFSTVNRSVFPPPKQQSKLYQVK) constitute a chloroplast transit peptide. Lysine 52 participates in a covalent cross-link: Glycyl lysine isopeptide (Lys-Gly) (interchain with G-Cter in ubiquitin). Basic and acidic residues-rich tracts occupy residues 76 to 94 (QRNI…NETE) and 106 to 115 (VPEDGFEKEM). 2 disordered regions span residues 76-163 (QRNI…KPKA) and 222-250 (REKG…EAAP). A compositionally biased stretch (pro residues) spans 136 to 146 (NPPPPPPPPPA).

Part of the chloroplast NDH complex, composed of a mixture of chloroplast and nucleus encoded subunits. Component of the electron donor-binding subcomplex, at least composed of NDHS, NDHT and NDHU. Interacts with the NDH subcomplex A via the protein NDHT and NDHU. Arg-193 is the critical site for the high affinity binding of NDH to ferredoxin.

It localises to the plastid. Its subcellular location is the chloroplast thylakoid membrane. It carries out the reaction a plastoquinone + NADH + (n+1) H(+)(in) = a plastoquinol + NAD(+) + n H(+)(out). The catalysed reaction is a plastoquinone + NADPH + (n+1) H(+)(in) = a plastoquinol + NADP(+) + n H(+)(out). Its function is as follows. NDH shuttles electrons from NAD(P)H:plastoquinone, via FMN and iron-sulfur (Fe-S) centers, to quinones in the photosynthetic chain and possibly in a chloroplast respiratory chain. The immediate electron acceptor for the enzyme in this species is believed to be plastoquinone. Couples the redox reaction to proton translocation, and thus conserves the redox energy in a proton gradient. Required for the efficient operation of ferredoxin-dependent plastoquinone reduction. Forms the electron donor-binding subcomplex in association with the NDHT and NDHU subunits. This Arabidopsis thaliana (Mouse-ear cress) protein is NAD(P)H-quinone oxidoreductase subunit S, chloroplastic.